The primary structure comprises 414 residues: Gamma-glutamyl phosphate reductase (414 aa).

Belongs to the gamma-glutamyl phosphate reductase family.

It localises to the cytoplasm. The enzyme catalyses L-glutamate 5-semialdehyde + phosphate + NADP(+) = L-glutamyl 5-phosphate + NADPH + H(+). Its pathway is amino-acid biosynthesis; L-proline biosynthesis; L-glutamate 5-semialdehyde from L-glutamate: step 2/2. Functionally, catalyzes the NADPH-dependent reduction of L-glutamate 5-phosphate into L-glutamate 5-semialdehyde and phosphate. The product spontaneously undergoes cyclization to form 1-pyrroline-5-carboxylate. This is Gamma-glutamyl phosphate reductase from Clostridium botulinum (strain Alaska E43 / Type E3).